The primary structure comprises 565 residues: Acyl-CoA ligase easD (565 aa).

ATP contacts are provided by residues Thr213–Lys221, His354–Thr359, Asp438, Arg457, and Lys555. Positions Asp284–His354 are SBD1. An SBD2 region spans residues Ala355–Tyr417.

This sequence belongs to the ATP-dependent AMP-binding enzyme family.

Its pathway is antibiotic biosynthesis. Acyl-CoA ligase; part of the gene cluster that mediates the biosynthesis of emericellamides, secondary metabolites acting as antibiotics. The biosynthesis of emericellamides initiates from the highly reducing polyketide synthase easB which catalyzes the formation of the linear polyketide chain. EasB produces several polyketides that can be further processed by the downstream enzymes. The polyketides are released from easB as linear polyketide carboxylic acids, which are converted to CoA thioesters by the acyl-CoA ligase easD. The substrates are then loaded onto the acyltransferase easC, which shuttles them to the first thiolation (T) domain of the nonribosomal peptide synthetase easA. EasA then performs condensation of the polyketides with one glycine, two alanine, one valine and one leucine residues. A last step of cyclization leads to the production of emericellamides. In Emericella nidulans (strain FGSC A4 / ATCC 38163 / CBS 112.46 / NRRL 194 / M139) (Aspergillus nidulans), this protein is Acyl-CoA ligase easD.